We begin with the raw amino-acid sequence, 57 residues long: uncharacterized protein (57 aa).

Residues 26 to 57 (VVSTRKRLKQNTNTPPHYDTSEDEDEDNYYNY) are disordered. A compositionally biased stretch (acidic residues) spans 46–57 (SEDEDEDNYYNY).

This is an uncharacterized protein from Autographa californica nuclear polyhedrosis virus (AcMNPV).